The following is a 115-amino-acid chain: Rubredoxin (115 aa).

The 52-residue stretch at 15-66 (SPNHECRACGYVYIPSQGDQKTSVSPGTPFEALPLNWKCPVCGAPRNYFIST) folds into the Rubredoxin-like domain. Residues C20, C23, C53, and C56 each contribute to the Fe cation site.

It belongs to the rubredoxin family. The cofactor is Fe(3+).

In terms of biological role, rubredoxin is a small nonheme, iron protein lacking acid-labile sulfide. Its single Fe, chelated to 4 Cys, functions as an electron acceptor and may also stabilize the conformation of the molecule. Could be involved in hydrogenase-linked redox processes. This is Rubredoxin (rub) from Synechocystis sp. (strain ATCC 27184 / PCC 6803 / Kazusa).